The primary structure comprises 149 residues: Protein OPG200 (149 aa).

The protein belongs to the orthopoxvirus OPG200 family. Homodimers. Interacts with host IKBKB; this interaction inhibits host NF-kappa-B activation.

Its function is as follows. Contributes to virulence by binding to the host IKBKB subunit of the IKK complex and preventing host NF-kappa-B activation in response to pro-inflammatory stimuli such as TNF-alpha or IL1B. Mechanistically, sterically hinders the direct contact between the kinase domains of IKBKB in the IKK complex containing IKBKB, CHUK/IKKA and NEMO. This Vaccinia virus (strain Western Reserve) (VACV) protein is Protein OPG200 (OPG200).